The sequence spans 394 residues: Argininosuccinate synthase (394 aa).

ATP is bound by residues 7 to 15 (AYSGGLDTS) and alanine 34. 2 residues coordinate L-citrulline: tyrosine 85 and serine 90. Position 115 (glycine 115) interacts with ATP. The L-aspartate site is built by threonine 117, asparagine 121, and aspartate 122. Residue asparagine 121 coordinates L-citrulline. Residues arginine 125, serine 176, serine 185, glutamate 261, and tyrosine 273 each contribute to the L-citrulline site.

This sequence belongs to the argininosuccinate synthase family. Type 1 subfamily. Homotetramer.

It is found in the cytoplasm. The enzyme catalyses L-citrulline + L-aspartate + ATP = 2-(N(omega)-L-arginino)succinate + AMP + diphosphate + H(+). The protein operates within amino-acid biosynthesis; L-arginine biosynthesis; L-arginine from L-ornithine and carbamoyl phosphate: step 2/3. The protein is Argininosuccinate synthase of Ehrlichia ruminantium (strain Welgevonden).